The chain runs to 266 residues: Apoptosis regulator ced-9 (266 aa).

Residues 1-58 are disordered; it reads MVDSMDMANSSQNTFRRRTMATSEMREFLSTKDAEPNNFGMQTIPESPTPSTPTRRMS. A compositionally biased stretch (basic and acidic residues) spans 24 to 35; that stretch reads EMREFLSTKDAE. Positions 75 to 94 match the BH4 motif; it reads IQGFVVDYFTYRIAQNGLDW. Positions 156–174 match the BH1 motif; sequence NTPCPMSYGRLIGLISFGG. Positions 208–223 match the BH2 motif; it reads SWKEHNRSWADFMKLG.

It belongs to the Bcl-2 family. Interacts with asymmetric homodimer ced-4; the interaction sequesters ced-4. Interacts with egl-1; the interaction results in ced-4 release. Interacts with dre-1; the interaction inhibits ced-9 activity, either directly or indirectly. Interacts with dct-1. May form a complex composed of ced-9, ced-4 and mac-1.

It is found in the perikaryon. It localises to the synapse. The protein localises to the endomembrane system. Its subcellular location is the mitochondrion membrane. Its function is as follows. Plays a major role in programmed cell death (PCD, apoptosis). egl-1 binds to and directly inhibits the activity of ced-9, releasing the cell death activator ced-4 from a ced-9/ced-4 containing protein complex and allowing ced-4 to activate the cell-killing caspase ced-3. During larval development, required for the elimination of transient presynaptic components downstream of egl-1 and upstream of ced-4 and ced-3 apoptotic pathway. The protein is Apoptosis regulator ced-9 (ced-9) of Caenorhabditis briggsae.